A 338-amino-acid polypeptide reads, in one-letter code: tRNA N6-adenosine threonylcarbamoyltransferase (338 aa).

The Fe cation site is built by His111 and His115. Substrate contacts are provided by residues 134–138 (LVSGG), Asp167, Gly180, and Asn272. Asp300 lines the Fe cation pocket.

It belongs to the KAE1 / TsaD family. It depends on Fe(2+) as a cofactor.

The protein resides in the cytoplasm. The enzyme catalyses L-threonylcarbamoyladenylate + adenosine(37) in tRNA = N(6)-L-threonylcarbamoyladenosine(37) in tRNA + AMP + H(+). In terms of biological role, required for the formation of a threonylcarbamoyl group on adenosine at position 37 (t(6)A37) in tRNAs that read codons beginning with adenine. Is involved in the transfer of the threonylcarbamoyl moiety of threonylcarbamoyl-AMP (TC-AMP) to the N6 group of A37, together with TsaE and TsaB. TsaD likely plays a direct catalytic role in this reaction. The polypeptide is tRNA N6-adenosine threonylcarbamoyltransferase (Nitrosomonas eutropha (strain DSM 101675 / C91 / Nm57)).